The sequence spans 173 residues: Crossover junction endodeoxyribonuclease RuvC (173 aa).

Residues Asp8, Glu67, and Asp139 contribute to the active site. Asp8, Glu67, and Asp139 together coordinate Mg(2+).

The protein belongs to the RuvC family. In terms of assembly, homodimer which binds Holliday junction (HJ) DNA. The HJ becomes 2-fold symmetrical on binding to RuvC with unstacked arms; it has a different conformation from HJ DNA in complex with RuvA. In the full resolvosome a probable DNA-RuvA(4)-RuvB(12)-RuvC(2) complex forms which resolves the HJ. The cofactor is Mg(2+).

The protein localises to the cytoplasm. The enzyme catalyses Endonucleolytic cleavage at a junction such as a reciprocal single-stranded crossover between two homologous DNA duplexes (Holliday junction).. Its function is as follows. The RuvA-RuvB-RuvC complex processes Holliday junction (HJ) DNA during genetic recombination and DNA repair. Endonuclease that resolves HJ intermediates. Cleaves cruciform DNA by making single-stranded nicks across the HJ at symmetrical positions within the homologous arms, yielding a 5'-phosphate and a 3'-hydroxyl group; requires a central core of homology in the junction. The consensus cleavage sequence is 5'-(A/T)TT(C/G)-3'. Cleavage occurs on the 3'-side of the TT dinucleotide at the point of strand exchange. HJ branch migration catalyzed by RuvA-RuvB allows RuvC to scan DNA until it finds its consensus sequence, where it cleaves and resolves the cruciform DNA. The chain is Crossover junction endodeoxyribonuclease RuvC from Klebsiella pneumoniae subsp. pneumoniae (strain ATCC 700721 / MGH 78578).